The following is a 281-amino-acid chain: Pantothenate synthetase (281 aa).

Met-30–His-37 contributes to the ATP binding site. His-37 (proton donor) is an active-site residue. Residue Gln-61 coordinates (R)-pantoate. Gln-61 serves as a coordination point for beta-alanine. Residue Gly-149–Asp-152 coordinates ATP. Gln-155 serves as a coordination point for (R)-pantoate. ATP contacts are provided by residues Ile-178 and Met-186–Arg-189.

This sequence belongs to the pantothenate synthetase family. In terms of assembly, homodimer.

It localises to the cytoplasm. The catalysed reaction is (R)-pantoate + beta-alanine + ATP = (R)-pantothenate + AMP + diphosphate + H(+). The protein operates within cofactor biosynthesis; (R)-pantothenate biosynthesis; (R)-pantothenate from (R)-pantoate and beta-alanine: step 1/1. Catalyzes the condensation of pantoate with beta-alanine in an ATP-dependent reaction via a pantoyl-adenylate intermediate. This is Pantothenate synthetase from Shewanella baltica (strain OS185).